The primary structure comprises 886 residues: MNSVNNIRSTFLDYFHRNGHEVLSSSPLVPRNDPTLMFTNAGMVQFKNVFTGLEKHSYNRATTAQKCVRAGGKHNDLDNVGYTARHHTFFEMLGNFSFSNYFKEEAIFYAWNLLTKEFCLSKDKLLVTVYHDDDVAAGLWRKISGLSEEKIIRIATNDNFWMMGDTGPCGPCSEIFYDHGDKIWGGPPGSADEDGDRFIEIWNLVFMQYEQLSKEKRIELPQPSIDTGMGLERIAAVLQGVHDNYDIDLFRTLIHASQEIIGVKATGDFFASHRVIADHLRSSAFLIADGIMPSNEGRGYVLRRIMRRAMRHAHLLGSKDLLMWRLVPVLISEMGQAYPELVRAESLISEILKLEETRFRKTLERGLGLLNEASTHLEEGDYFNGEVAFKLYDTYGFPLDLTQDALRRRGISVDVDAFDKAMKRQKAEARANWSGSGDCVTETVWFSIRDQVGATEFLGYETEKAEGIITALIRDGEVVDHIDLGQKAMIVVNQTPFYGESGGQVGDSGIISGANFIFEVHDTQKKGDNVFIHIGEIKTGQAKKHDCVELIVDSARRRKIRANHSATHLLHESLRQTLGSHVVQKGSFVSPDRLRFDFSHPKSISSEELKKIEDLANDIVLQNSKVTTRLMAIDDAIAEGAMALFGEKYGDEVRVISMGNNLEQTGSKKWWSIELCGGTHVQRTGDIGLIHIISETSVAAGVRRIEALTATAARLYLHGQDRRVYEIAGLLKTSPADVQERVQTLLDERRKLEKELNDSRKKIALNGGSVNSQGDIQTINGISFMGGVVSNILPKDLKALVDSGKKKIGSGVVAFISVSEDGKGSAVVGVTDDLTDTLNAVDLVRIISVTLGGQGGGGRRDMAQAGGSEGGKADEALVALKDSLKG.

The Zn(2+) site is built by His564, His568, Cys676, and His680.

The protein belongs to the class-II aminoacyl-tRNA synthetase family. Zn(2+) is required as a cofactor.

It is found in the cytoplasm. The catalysed reaction is tRNA(Ala) + L-alanine + ATP = L-alanyl-tRNA(Ala) + AMP + diphosphate. Functionally, catalyzes the attachment of alanine to tRNA(Ala) in a two-step reaction: alanine is first activated by ATP to form Ala-AMP and then transferred to the acceptor end of tRNA(Ala). Also edits incorrectly charged Ser-tRNA(Ala) and Gly-tRNA(Ala) via its editing domain. This chain is Alanine--tRNA ligase, found in Bartonella bacilliformis (strain ATCC 35685 / KC583 / Herrer 020/F12,63).